The chain runs to 64 residues: Alpha-toxin Amm5 (64 aa).

In terms of domain architecture, LCN-type CS-alpha/beta spans 2–64 (KDGYIIDDLN…VSIKEKGRCN (63 aa)). Intrachain disulfides connect C12–C63, C16–C36, C22–C46, and C26–C48. N64 is subject to Asparagine amide.

In terms of tissue distribution, expressed by the venom gland.

Its subcellular location is the secreted. Alpha toxins bind voltage-independently at site-3 of sodium channels (Nav) and inhibit the inactivation of the activated channels, thereby blocking neuronal transmission. In Androctonus mauritanicus mauritanicus (Scorpion), this protein is Alpha-toxin Amm5.